A 163-amino-acid chain; its full sequence is Putative defense protein 3 (163 aa).

The N-terminal stretch at 1-18 (MMFAYIVAVVSALALTSA) is a signal peptide. The Reelin domain occupies 19–163 (YPTGAPSSTC…SAPVTVLSHK (145 aa)). A disulfide bond links Cys-28 and Cys-103.

This sequence belongs to the insect defense protein family.

Its subcellular location is the secreted. May have antimicrobial activity. This is Putative defense protein 3 from Antheraea mylitta (Tasar silkworm).